The following is a 254-amino-acid chain: SLA class II histocompatibility antigen, DQ haplotype C alpha chain (254 aa).

The first 23 residues, 1–23, serve as a signal peptide directing secretion; the sequence is MVPGRVLMWGALALTTVMSACGG. Residues 24 to 120 form an alpha-1 region; the sequence is EDIAADHVAS…KVPEVTVFSK (97 aa). At 24–216 the chain is on the extracellular side; the sequence is EDIAADHVAS…IPAPMSELTE (193 aa). Asparagine 104 and asparagine 144 each carry an N-linked (GlcNAc...) asparagine glycan. One can recognise an Ig-like C1-type domain in the interval 113–204; that stretch reads PEVTVFSKSP…LDKPLLKHWE (92 aa). An alpha-2 region spans residues 121 to 203; it reads SPVILGQPNT…GLDKPLLKHW (83 aa). Cysteine 133 and cysteine 188 form a disulfide bridge. Residues 204–216 form a connecting peptide region; it reads EPEIPAPMSELTE. Residues 217-239 traverse the membrane as a helical segment; sequence TVVCALGLIVGLVGIVVGTVFII. The Cytoplasmic portion of the chain corresponds to 240–254; sequence QGLRSGGPSRHQGSL.

Belongs to the MHC class II family.

It is found in the membrane. The protein is SLA class II histocompatibility antigen, DQ haplotype C alpha chain of Sus scrofa (Pig).